A 305-amino-acid polypeptide reads, in one-letter code: MIGILGAGAFGTALAVTLGREQPVTLWARGGTPRLAVDLPEQVQLTADFGEALAGTVLLAVPMQALGGLLRAEAARLQGRALVACCKGVDLATGLGPTGLIAEACPGSPAAILTGPSFAADIARGLPTALTLATQDEAAGEALQRQLSTAALRLYRTTDTVGAELGGALKNVIAIAAGVVIGAGLGQSARAALMTRGYAEMQRLALALGARPETLAGLSGLGDLVLTCTSDQSRNFRYGQALGAGAAFDGSVTVEGRATARAVVDLAVRHGIDMPIAAMVDALVEGRVTLPQAIQSLLSRPLKQE.

Residues Phe-10, Arg-29, and Lys-87 each contribute to the NADPH site. Residues Lys-87, Gly-115, and Ser-117 each contribute to the sn-glycerol 3-phosphate site. NADPH is bound at residue Ala-119. 5 residues coordinate sn-glycerol 3-phosphate: Lys-170, Asp-223, Ser-233, Arg-234, and Asn-235. The active-site Proton acceptor is the Lys-170. Arg-234 is a binding site for NADPH. Glu-255 contributes to the NADPH binding site.

Belongs to the NAD-dependent glycerol-3-phosphate dehydrogenase family.

It localises to the cytoplasm. The enzyme catalyses sn-glycerol 3-phosphate + NAD(+) = dihydroxyacetone phosphate + NADH + H(+). It catalyses the reaction sn-glycerol 3-phosphate + NADP(+) = dihydroxyacetone phosphate + NADPH + H(+). Its pathway is membrane lipid metabolism; glycerophospholipid metabolism. Catalyzes the reduction of the glycolytic intermediate dihydroxyacetone phosphate (DHAP) to sn-glycerol 3-phosphate (G3P), the key precursor for phospholipid synthesis. The sequence is that of Glycerol-3-phosphate dehydrogenase [NAD(P)+] from Cereibacter sphaeroides (strain ATCC 17023 / DSM 158 / JCM 6121 / CCUG 31486 / LMG 2827 / NBRC 12203 / NCIMB 8253 / ATH 2.4.1.) (Rhodobacter sphaeroides).